Reading from the N-terminus, the 594-residue chain is Golgi-associated RAB2 interactor protein 4 (594 aa).

The segment at 390 to 525 (AAGLPVSTRQ…SSGSSKRLGR (136 aa)) is disordered. A compositionally biased stretch (polar residues) spans 396–406 (STRQSKSSLSG). Basic and acidic residues-rich tracts occupy residues 408–433 (HGRERTQASAEACKEGRERREKDKAL), 442–455 (TGESRHKTRGDKIA), and 468–477 (ASRDGKKEKG). Over residues 510-521 (RSSSTTSSGSSK) the composition is skewed to low complexity.

It belongs to the GARIN family. Interacts (via N-terminus) with RAB2B (in GTP-bound form).

It is found in the golgi apparatus. Its function is as follows. RAB2B effector protein required for the compacted Golgi morphology, probably through interaction with small GTPase RAB2B. The sequence is that of Golgi-associated RAB2 interactor protein 4 (GARIN4) from Macaca fascicularis (Crab-eating macaque).